We begin with the raw amino-acid sequence, 367 residues long: Peptide chain release factor 2 (367 aa).

Residue Gln254 is modified to N5-methylglutamine.

The protein belongs to the prokaryotic/mitochondrial release factor family. In terms of processing, methylated by PrmC. Methylation increases the termination efficiency of RF2.

It localises to the cytoplasm. Peptide chain release factor 2 directs the termination of translation in response to the peptide chain termination codons UGA and UAA. The sequence is that of Peptide chain release factor 2 from Variovorax paradoxus (strain S110).